We begin with the raw amino-acid sequence, 1256 residues long: Protein transport protein SEC31 (1256 aa).

6 WD repeats span residues 7–47 (IPRT…ELWE), 66–110 (SVDS…TGAS), 119–159 (KHTG…KSFR), 165–205 (ANPD…ENLT), 209–241 (FGRK…LVLA), and 242–281 (HDQG…QLGR). The WD 7; interaction with SEC13 repeat unit spans residues 368–390 (AFGFGGKLVRFGVVDAKSKITIS). 2 disordered regions span residues 460-481 (EEAP…EGSS) and 761-1139 (KQAT…REHI). Composition is skewed to low complexity over residues 765-809 (RKGA…TASP) and 833-862 (QQAQ…PVQQ). Positions 944 to 968 (GFPPQSRPTPPPPPKGPPQGPPRMT) are enriched in pro residues. Low complexity-rich tracts occupy residues 969 to 978 (SPPSQAGGAP) and 1023 to 1041 (APPS…SAPS). Residues 1046–1058 (MPPPRNIAPPPGQ) show a composition bias toward pro residues. The span at 1061–1082 (PGASAYAPSPYAQSPAQQAPAA) shows a compositional bias: low complexity. The segment covering 1083-1111 (VAPPPRGPPQGPPRAGPPPGGPPQGGPPR) has biased composition (pro residues). The segment covering 1123–1132 (PAAPAAARYP) has biased composition (low complexity).

The protein belongs to the WD repeat SEC31 family. As to quaternary structure, the COPII coat is composed of at least 5 proteins: the SEC23/24 complex, the SEC13/31 complex, and the protein SAR1. SEC13 and SEC31 make a 2:2 tetramer that forms the edge element of the COPII outer coat. The tetramer self-assembles in multiple copies to form the complete polyhedral cage. Interacts (via WD 7) with SEC13.

The protein resides in the cytoplasmic vesicle. It is found in the COPII-coated vesicle membrane. It localises to the endoplasmic reticulum membrane. Component of the coat protein complex II (COPII) which promotes the formation of transport vesicles from the endoplasmic reticulum (ER). The coat has two main functions, the physical deformation of the endoplasmic reticulum membrane into vesicles and the selection of cargo molecules. In Phaeosphaeria nodorum (strain SN15 / ATCC MYA-4574 / FGSC 10173) (Glume blotch fungus), this protein is Protein transport protein SEC31 (SEC31).